A 613-amino-acid polypeptide reads, in one-letter code: Threonine--tRNA ligase (613 aa).

Residues 1 to 147 (MRLLLIHARS…TITPQESAPQ (147 aa)) are editing domain. Catalytic regions lie at residues 199 to 495 (PRYI…PALP) and 200 to 495 (RYID…PALP). Zn(2+) is bound by residues Cys292, His343, and His464.

Belongs to the class-II aminoacyl-tRNA synthetase family. As to quaternary structure, homodimer. The cofactor is Zn(2+).

Its subcellular location is the cytoplasm. It catalyses the reaction tRNA(Thr) + L-threonine + ATP = L-threonyl-tRNA(Thr) + AMP + diphosphate + H(+). Functionally, catalyzes the attachment of threonine to tRNA(Thr) in a two-step reaction: L-threonine is first activated by ATP to form Thr-AMP and then transferred to the acceptor end of tRNA(Thr). Also edits incorrectly charged L-seryl-tRNA(Thr). The polypeptide is Threonine--tRNA ligase (Caldivirga maquilingensis (strain ATCC 700844 / DSM 13496 / JCM 10307 / IC-167)).